The chain runs to 83 residues: Small ribosomal subunit protein bS20 (83 aa).

Belongs to the bacterial ribosomal protein bS20 family.

Its function is as follows. Binds directly to 16S ribosomal RNA. In Staphylococcus carnosus (strain TM300), this protein is Small ribosomal subunit protein bS20.